The sequence spans 176 residues: Ribosome maturation factor RimM (176 aa).

A PRC barrel domain is found at 93 to 168 (DDEVYIEDIL…TIRITPPPGL (76 aa)).

Belongs to the RimM family. As to quaternary structure, binds ribosomal protein uS19.

The protein localises to the cytoplasm. An accessory protein needed during the final step in the assembly of 30S ribosomal subunit, possibly for assembly of the head region. Essential for efficient processing of 16S rRNA. May be needed both before and after RbfA during the maturation of 16S rRNA. It has affinity for free ribosomal 30S subunits but not for 70S ribosomes. The polypeptide is Ribosome maturation factor RimM (Oleidesulfovibrio alaskensis (strain ATCC BAA-1058 / DSM 17464 / G20) (Desulfovibrio alaskensis)).